The following is a 553-amino-acid chain: ATP synthase F(1) complex subunit alpha, mitochondrial (553 aa).

The N-terminal 43 residues, 1–43, are a transit peptide targeting the mitochondrion; the sequence is MLSVRVAAAVARALPRRAGLVSKNALGSSFVGARNLHASNTRL. Residues S53 and S65 each carry the phosphoserine modification. S76 bears the Phosphoserine; alternate mark. The O-linked (GlcNAc) serine; alternate glycan is linked to S76. S106 bears the Phosphoserine mark. K123, K126, and K132 each carry N6-acetyllysine. T134 bears the Phosphothreonine mark. K161 bears the N6-acetyllysine; alternate mark. At K161 the chain carries N6-succinyllysine; alternate. S166 is subject to Phosphoserine. At K167 the chain carries N6-acetyllysine; alternate. K167 is modified (N6-succinyllysine; alternate). S184 is subject to Phosphoserine. The residue at position 204 (R204) is an Omega-N-methylarginine. Q215, G217, K218, T219, and S220 together coordinate ATP. T219 is a binding site for Mg(2+). Residues K230 and K239 each carry the N6-acetyllysine; alternate modification. N6-succinyllysine; alternate is present on residues K230 and K239. K240 carries the post-translational modification N6-acetyllysine. N6-acetyllysine; alternate is present on residues K261 and K305. An N6-succinyllysine; alternate mark is found at K261 and K305. Position 312 (D312) interacts with Mg(2+). K427 carries the post-translational modification N6-acetyllysine; alternate. An N6-succinyllysine; alternate modification is found at K427. Residue K434 is modified to N6-acetyllysine. Residues Q473 and Q475 each coordinate ATP. K498 and K506 each carry N6-acetyllysine; alternate. N6-succinyllysine; alternate is present on residues K498 and K506. A Phosphoserine modification is found at S521. K531 and K539 each carry N6-acetyllysine; alternate. 2 positions are modified to N6-succinyllysine; alternate: K531 and K539. At K541 the chain carries N6-acetyllysine.

It belongs to the ATPase alpha/beta chains family. As to quaternary structure, homotrimer. Component of the ATP synthase complex composed at least of ATP5F1A/subunit alpha, ATP5F1B/subunit beta, ATP5MC1/subunit c (homooctomer), MT-ATP6/subunit a, MT-ATP8/subunit 8, ATP5ME/subunit e, ATP5MF/subunit f, ATP5MG/subunit g, ATP5MK/subunit k, ATP5MJ/subunit j, ATP5F1C/subunit gamma, ATP5F1D/subunit delta, ATP5F1E/subunit epsilon, ATP5PF/subunit F6, ATP5PB/subunit b, ATP5PD/subunit d, ATP5PO/subunit OSCP. ATP synthase complex consists of a soluble F(1) head domain (subunits alpha(3) and beta(3)) - the catalytic core - and a membrane F(0) domain - the membrane proton channel (subunits c, a, 8, e, f, g, k and j). These two domains are linked by a central stalk (subunits gamma, delta, and epsilon) rotating inside the F1 region and a stationary peripheral stalk (subunits F6, b, d, and OSCP). Interacts with ATPAF2. Interacts with HRG; the interaction occurs on the surface of T-cells and alters the cell morphology when associated with concanavalin (in vitro). Interacts with PLG (angiostatin peptide); the interaction inhibits most of the angiogenic properties of angiostatin. Interacts with BLOC1S1. Interacts with BCL2L1 isoform BCL-X(L); the interaction mediates the association of BCL2L1 isoform BCL-X(L) with the mitochondrial membrane F(1)F(0) ATP synthase and enhances neurons metabolic efficiency. Interacts with CLN5 and PPT1. Interacts with S100A1; this interaction increases F1-ATPase activity. Interacts with ABCB7; this interaction allows the regulation of cellular iron homeostasis and cellular reactive oxygen species (ROS) levels in cardiomyocytes. Post-translationally, acetylated on lysine residues. BLOC1S1 is required for acetylation. Acetylation of Lys-132, Lys-230 and Lys-498 is observed in liver mitochondria from fasted mice but not from fed mice.

Its subcellular location is the mitochondrion inner membrane. The protein resides in the cell membrane. In terms of biological role, subunit alpha, of the mitochondrial membrane ATP synthase complex (F(1)F(0) ATP synthase or Complex V) that produces ATP from ADP in the presence of a proton gradient across the membrane which is generated by electron transport complexes of the respiratory chain. ATP synthase complex consist of a soluble F(1) head domain - the catalytic core - and a membrane F(1) domain - the membrane proton channel. These two domains are linked by a central stalk rotating inside the F(1) region and a stationary peripheral stalk. During catalysis, ATP synthesis in the catalytic domain of F(1) is coupled via a rotary mechanism of the central stalk subunits to proton translocation. In vivo, can only synthesize ATP although its ATP hydrolase activity can be activated artificially in vitro. With the catalytic subunit beta (ATP5F1B), forms the catalytic core in the F(1) domain. Subunit alpha does not bear the catalytic high-affinity ATP-binding sites. This Mus musculus (Mouse) protein is ATP synthase F(1) complex subunit alpha, mitochondrial.